Reading from the N-terminus, the 396-residue chain is Dimethyladenosine transferase 2, mitochondrial (396 aa).

The N-terminal 19 residues, 1–19, are a transit peptide targeting the mitochondrion; that stretch reads MWIPVVGLPRRLRLSALAG. A disordered region spans residues 44–64; sequence LSDSSPQLWPEPDFRNPPRKA. 3 residues coordinate S-adenosyl-L-methionine: Val-75, Glu-124, and Asp-150. The interval 330–331 is DNA-binding; that stretch reads RR.

It belongs to the class I-like SAM-binding methyltransferase superfamily. rRNA adenine N(6)-methyltransferase family. KsgA subfamily. In terms of assembly, homodimer. Component of the mitochondrial transcription initiation complex, composed at least of TFB2M, TFAM and POLRMT. In this complex TFAM recruits POLRMT to the promoter whereas TFB2M induces structural changes in POLRMT to enable promoter opening and trapping of the DNA non-template strand. Interacts with mitochondrial RNA polymerase POLRMT. Interacts with TFAM. As to expression, ubiquitously expressed.

It localises to the mitochondrion. It catalyses the reaction adenosine in rRNA + S-adenosyl-L-methionine = N(6)-methyladenosine in rRNA + S-adenosyl-L-homocysteine + H(+). Its function is as follows. S-adenosyl-L-methionine-dependent rRNA methyltransferase which may methylate two specific adjacent adenosines in the loop of a conserved hairpin near the 3'-end of 12S mitochondrial rRNA. Component of the mitochondrial transcription initiation complex, composed at least of TFB2M, TFAM and POLRMT that is required for basal transcription of mitochondrial DNA. In this complex, TFAM recruits POLRMT to a specific promoter whereas TFB2M induces structural changes in POLRMT to enable promoter opening and trapping of the DNA non-template strand. Stimulates transcription independently of the methyltransferase activity. The sequence is that of Dimethyladenosine transferase 2, mitochondrial from Homo sapiens (Human).